Here is a 185-residue protein sequence, read N- to C-terminus: Translocon-associated protein subunit gamma (185 aa).

Residue Met-1 is modified to N-acetylmethionine. Residues Met-1–Lys-27 are Lumenal-facing. Phosphoserine is present on residues Ser-7 and Ser-11. A helical membrane pass occupies residues Ser-28–Trp-48. The Cytoplasmic segment spans residues Arg-49–Asp-54. Residues Leu-55–Ala-76 form a helical membrane-spanning segment. Topologically, residues Tyr-77 to Thr-135 are lumenal. Ser-105 carries the post-translational modification Phosphoserine. A helical transmembrane segment spans residues Phe-136–Leu-157. Over Lys-158 to Thr-163 the chain is Cytoplasmic. A helical membrane pass occupies residues Val-164 to Ser-184.

Belongs to the TRAP-gamma family. In terms of assembly, heterotetramer of TRAP-alpha, TRAP-beta, TRAP-delta and TRAP-gamma.

The protein localises to the endoplasmic reticulum membrane. In terms of biological role, TRAP proteins are part of a complex whose function is to bind calcium to the ER membrane and thereby regulate the retention of ER resident proteins. The polypeptide is Translocon-associated protein subunit gamma (SSR3) (Homo sapiens (Human)).